The primary structure comprises 100 residues: Urease subunit gamma (100 aa).

This sequence belongs to the urease gamma subunit family. In terms of assembly, heterotrimer of UreA (gamma), UreB (beta) and UreC (alpha) subunits. Three heterotrimers associate to form the active enzyme.

The protein localises to the cytoplasm. The enzyme catalyses urea + 2 H2O + H(+) = hydrogencarbonate + 2 NH4(+). The protein operates within nitrogen metabolism; urea degradation; CO(2) and NH(3) from urea (urease route): step 1/1. The sequence is that of Urease subunit gamma from Chromohalobacter salexigens (strain ATCC BAA-138 / DSM 3043 / CIP 106854 / NCIMB 13768 / 1H11).